A 106-amino-acid chain; its full sequence is MEYLIPGEIITEDGDIELNSGKNAKTLTVSNTGDRPIQVGSHYHFFETNKALIFTREITLGMRLDIPAGTAIRFEPGDTTEVKLIPYSGYRNAFGFNALINGPLDS.

It belongs to the urease beta subunit family. As to quaternary structure, heterotrimer of UreA (gamma), UreB (beta) and UreC (alpha) subunits. Three heterotrimers associate to form the active enzyme.

The protein localises to the cytoplasm. The enzyme catalyses urea + 2 H2O + H(+) = hydrogencarbonate + 2 NH4(+). It participates in nitrogen metabolism; urea degradation; CO(2) and NH(3) from urea (urease route): step 1/1. The chain is Urease subunit beta from Prochlorococcus marinus subsp. pastoris (strain CCMP1986 / NIES-2087 / MED4).